The following is a 99-amino-acid chain: Large ribosomal subunit protein bL27 (99 aa).

Positions 13-65 are disordered; it reads AHHKGGGSTTNGRNSAGRRLGAKRADGQEVHAGSIIYRQRGTKIHPGKNVGRG.

This sequence belongs to the bacterial ribosomal protein bL27 family.

This is Large ribosomal subunit protein bL27 from Lactobacillus delbrueckii subsp. bulgaricus (strain ATCC BAA-365 / Lb-18).